We begin with the raw amino-acid sequence, 215 residues long: 3-dehydroquinate dehydratase (215 aa).

3-dehydroquinate is bound by residues 27–29 (ELR) and Arg-54. The Proton donor/acceptor role is filled by His-112. Catalysis depends on Lys-139, which acts as the Schiff-base intermediate with substrate. 3-dehydroquinate is bound by residues Arg-176 and Gln-198.

It belongs to the type-I 3-dehydroquinase family. In terms of assembly, homodimer.

It carries out the reaction 3-dehydroquinate = 3-dehydroshikimate + H2O. The protein operates within metabolic intermediate biosynthesis; chorismate biosynthesis; chorismate from D-erythrose 4-phosphate and phosphoenolpyruvate: step 3/7. In terms of biological role, involved in the third step of the chorismate pathway, which leads to the biosynthesis of aromatic amino acids. Catalyzes the cis-dehydration of 3-dehydroquinate (DHQ) and introduces the first double bond of the aromatic ring to yield 3-dehydroshikimate. The polypeptide is 3-dehydroquinate dehydratase (Pyrococcus abyssi (strain GE5 / Orsay)).